Here is a 452-residue protein sequence, read N- to C-terminus: Poly(A) polymerase I (452 aa).

Residues Asp-68, Asp-70, and Asp-150 contribute to the active site. The disordered stretch occupies residues 427–452 (EQQRLHPKPKKKYYRPRRRKTTCSAE). Over residues 431-452 (LHPKPKKKYYRPRRRKTTCSAE) the composition is skewed to basic residues.

It belongs to the tRNA nucleotidyltransferase/poly(A) polymerase family.

The enzyme catalyses RNA(n) + ATP = RNA(n)-3'-adenine ribonucleotide + diphosphate. Adds poly(A) tail to the 3' end of many RNAs, which usually targets these RNAs for decay. Plays a significant role in the global control of gene expression, through influencing the rate of transcript degradation, and in the general RNA quality control. The polypeptide is Poly(A) polymerase I (Haemophilus influenzae (strain ATCC 51907 / DSM 11121 / KW20 / Rd)).